The sequence spans 254 residues: 5'/3'-nucleotidase SurE (254 aa).

Residues Asp8, Asp9, Ser39, and Asn92 each coordinate a divalent metal cation.

It belongs to the SurE nucleotidase family. It depends on a divalent metal cation as a cofactor.

The protein localises to the cytoplasm. It carries out the reaction a ribonucleoside 5'-phosphate + H2O = a ribonucleoside + phosphate. The catalysed reaction is a ribonucleoside 3'-phosphate + H2O = a ribonucleoside + phosphate. The enzyme catalyses [phosphate](n) + H2O = [phosphate](n-1) + phosphate + H(+). Its function is as follows. Nucleotidase with a broad substrate specificity as it can dephosphorylate various ribo- and deoxyribonucleoside 5'-monophosphates and ribonucleoside 3'-monophosphates with highest affinity to 3'-AMP. Also hydrolyzes polyphosphate (exopolyphosphatase activity) with the preference for short-chain-length substrates (P20-25). Might be involved in the regulation of dNTP and NTP pools, and in the turnover of 3'-mononucleotides produced by numerous intracellular RNases (T1, T2, and F) during the degradation of various RNAs. In Edwardsiella ictaluri (strain 93-146), this protein is 5'/3'-nucleotidase SurE.